Reading from the N-terminus, the 156-residue chain is Small ribosomal subunit protein uS7 (156 aa).

This sequence belongs to the universal ribosomal protein uS7 family. As to quaternary structure, part of the 30S ribosomal subunit. Contacts proteins S9 and S11.

One of the primary rRNA binding proteins, it binds directly to 16S rRNA where it nucleates assembly of the head domain of the 30S subunit. Is located at the subunit interface close to the decoding center, probably blocks exit of the E-site tRNA. The polypeptide is Small ribosomal subunit protein uS7 (Dehalococcoides mccartyi (strain ATCC BAA-2100 / JCM 16839 / KCTC 5957 / BAV1)).